The following is a 261-amino-acid chain: Indole-3-glycerol phosphate synthase (261 aa).

It belongs to the TrpC family.

The enzyme catalyses 1-(2-carboxyphenylamino)-1-deoxy-D-ribulose 5-phosphate + H(+) = (1S,2R)-1-C-(indol-3-yl)glycerol 3-phosphate + CO2 + H2O. The protein operates within amino-acid biosynthesis; L-tryptophan biosynthesis; L-tryptophan from chorismate: step 4/5. This is Indole-3-glycerol phosphate synthase from Burkholderia multivorans (strain ATCC 17616 / 249).